The following is a 186-amino-acid chain: UPF0301 protein Sfri_2850 (186 aa).

This sequence belongs to the UPF0301 (AlgH) family.

This chain is UPF0301 protein Sfri_2850, found in Shewanella frigidimarina (strain NCIMB 400).